The sequence spans 545 residues: CTP synthase (545 aa).

The tract at residues 1–266 is amidoligase domain; sequence MTKNYIFITG…DDYICNYFKL (266 aa). Serine 14 is a CTP binding site. Residue serine 14 participates in UTP binding. Residues 15–20 and aspartate 72 each bind ATP; that span reads SLGKGI. Mg(2+) contacts are provided by aspartate 72 and glutamate 140. Residues 147–149, 187–192, and lysine 223 contribute to the CTP site; these read DIE and KTKPTQ. UTP is bound by residues 187–192 and lysine 223; that span reads KTKPTQ. 239–241 serves as a coordination point for ATP; the sequence is KDV. Positions 291–543 constitute a Glutamine amidotransferase type-1 domain; the sequence is VIGIIGKYIK…IKSAGKHKKN (253 aa). Glycine 352 contributes to the L-glutamine binding site. Cysteine 379 serves as the catalytic Nucleophile; for glutamine hydrolysis. L-glutamine-binding positions include 380 to 383, glutamate 403, and arginine 471; that span reads LGMQ. Catalysis depends on residues histidine 516 and glutamate 518.

The protein belongs to the CTP synthase family. In terms of assembly, homotetramer.

It catalyses the reaction UTP + L-glutamine + ATP + H2O = CTP + L-glutamate + ADP + phosphate + 2 H(+). The catalysed reaction is L-glutamine + H2O = L-glutamate + NH4(+). The enzyme catalyses UTP + NH4(+) + ATP = CTP + ADP + phosphate + 2 H(+). Its pathway is pyrimidine metabolism; CTP biosynthesis via de novo pathway; CTP from UDP: step 2/2. Allosterically activated by GTP, when glutamine is the substrate; GTP has no effect on the reaction when ammonia is the substrate. The allosteric effector GTP functions by stabilizing the protein conformation that binds the tetrahedral intermediate(s) formed during glutamine hydrolysis. Inhibited by the product CTP, via allosteric rather than competitive inhibition. Its function is as follows. Catalyzes the ATP-dependent amination of UTP to CTP with either L-glutamine or ammonia as the source of nitrogen. Regulates intracellular CTP levels through interactions with the four ribonucleotide triphosphates. The protein is CTP synthase of Buchnera aphidicola subsp. Acyrthosiphon pisum (strain Tuc7).